A 222-amino-acid polypeptide reads, in one-letter code: Ribosomal RNA large subunit methyltransferase E (222 aa).

Positions M1–K13 are enriched in basic and acidic residues. The segment at M1–S22 is disordered. S-adenosyl-L-methionine is bound by residues G75, W77, D94, D110, and D134. K174 acts as the Proton acceptor in catalysis.

It belongs to the class I-like SAM-binding methyltransferase superfamily. RNA methyltransferase RlmE family.

Its subcellular location is the cytoplasm. It carries out the reaction uridine(2552) in 23S rRNA + S-adenosyl-L-methionine = 2'-O-methyluridine(2552) in 23S rRNA + S-adenosyl-L-homocysteine + H(+). Its function is as follows. Specifically methylates the uridine in position 2552 of 23S rRNA at the 2'-O position of the ribose in the fully assembled 50S ribosomal subunit. The sequence is that of Ribosomal RNA large subunit methyltransferase E from Novosphingobium aromaticivorans (strain ATCC 700278 / DSM 12444 / CCUG 56034 / CIP 105152 / NBRC 16084 / F199).